Consider the following 100-residue polypeptide: Enhancer of yellow 2 transcription factor (100 aa).

The protein belongs to the ENY2 family. As to quaternary structure, component of the nuclear pore complex (NPC)-associated AMEX complex (anchoring and mRNA export complex), composed of at least e(y)2 and xmas-2. Component of the SAGA transcription coactivator-HAT complexes, at least composed of Ada2b, e(y)2, Pcaf/Gcn5, Taf10 and Nipped-A/Trrap. Within the SAGA complex, e(y)2, Sgf11, and not/nonstop form an additional subcomplex of SAGA called the DUB module (deubiquitination module). Component of the THO complex, composed of at least e(y)2, HPR1, THO2, THOC5, THOC6 and THOC7. Interacts with e(y)1. Interacts with su(Hw) (via zinc fingers). Interacts with xmas-2; required for localization to the nuclear periphery. Interacts with the nuclear pore complex (NPC).

Its subcellular location is the nucleus. It localises to the nucleoplasm. The protein resides in the cytoplasm. Its function is as follows. Involved in mRNA export coupled transcription activation by association with both the AMEX and the SAGA complexes. The SAGA complex is a multiprotein complex that activates transcription by remodeling chromatin and mediating histone acetylation and deubiquitination. Within the SAGA complex, participates in a subcomplex that specifically deubiquitinates histone H2B. The SAGA complex is recruited to specific gene promoters by activators, where it is required for transcription. Required for nuclear receptor-mediated transactivation. Involved in transcription elongation by recruiting the THO complex onto nascent mRNA. The AMEX complex functions in docking export-competent ribonucleoprotein particles (mRNPs) to the nuclear entrance of the nuclear pore complex (nuclear basket). AMEX participates in mRNA export and accurate chromatin positioning in the nucleus by tethering genes to the nuclear periphery. The protein is Enhancer of yellow 2 transcription factor of Drosophila persimilis (Fruit fly).